A 384-amino-acid polypeptide reads, in one-letter code: MTFVVSVNAANPTPKVKKPTVARSIPSPTSLPLPDEIIVNCFAYIPRCDYPSLSLVSKTFNRLITSIELNIVRSLFQRTENVLYVALRFSHEEDPIWYTLNQKPYKNKSNSCIHKLVPLPSCPSLPCWGSSVIAIGHKIYVFGGCINGDMTSNVFVIDCLHGTFQFLPSMRVPRGCAAFGIVDGKIYVIGGYNKADSLDNWVEVFDLEKQTWESFSGLCNEELSKITLKSVVMNKKIYIMDRGNGIVFDPKKGVWERDFLLDRDWVVGSCVIDNMLYTFGFDSVKRIYRVRVYDPSVRVWSFVKGIEDIPKMDGTLGSRMANHGGKLVILLNLDKNGGTELWCIKIALERRGQQGEIWGKILWYNLVLTLENSSTIVECFDITI.

The F-box domain occupies 27 to 79 (SPTSLPLPDEIIVNCFAYIPRCDYPSLSLVSKTFNRLITSIELNIVRSLFQRT). Kelch repeat units lie at residues 138–184 (KIYV…IVDG), 185–235 (KIYV…VMNK), 237–274 (IYIMDRGNGIVFDPKKGVWERDFLLDRDWVVGSCVIDN), and 275–323 (MLYT…MANH).

The sequence is that of Putative F-box/kelch-repeat protein At3g27910 from Arabidopsis thaliana (Mouse-ear cress).